The following is a 558-amino-acid chain: T-complex protein 1 subunit eta (558 aa).

Positions 524–558 are disordered; it reads VRNPKSEQPKAPPGGLRRGGPQGMAGLAKNARLGK.

Belongs to the TCP-1 chaperonin family. In terms of assembly, heterooligomeric complex of about 850 to 900 kDa that forms two stacked rings, 12 to 16 nm in diameter.

Its subcellular location is the cytoplasm. Functionally, molecular chaperone; assists the folding of proteins upon ATP hydrolysis. Known to play a role, in vitro, in the folding of actin and tubulin. The protein is T-complex protein 1 subunit eta of Tetrahymena pyriformis.